Consider the following 215-residue polypeptide: UPF0502 protein Gbem_0102 (215 aa).

Belongs to the UPF0502 family.

This is UPF0502 protein Gbem_0102 from Citrifermentans bemidjiense (strain ATCC BAA-1014 / DSM 16622 / JCM 12645 / Bem) (Geobacter bemidjiensis).